Here is a 454-residue protein sequence, read N- to C-terminus: Probable mitochondrial saccharopine dehydrogenase-like oxidoreductase At5g39410 (454 aa).

At M1 the chain carries N-acetylmethionine. The segment at 215 to 234 is disordered; it reads RRSRPRRPRPTICGPPAKGP.

The protein belongs to the saccharopine dehydrogenase family.

The protein resides in the mitochondrion membrane. In Arabidopsis thaliana (Mouse-ear cress), this protein is Probable mitochondrial saccharopine dehydrogenase-like oxidoreductase At5g39410.